We begin with the raw amino-acid sequence, 1964 residues long: Neurogenic locus notch homolog protein 4 (1964 aa).

The signal sequence occupies residues 1–20 (MQPQLLLLLLLPLNFPVILT). EGF-like domains follow at residues 21-60 (RELL…ETCQ), 61-112 (FPDP…DRCQ), 115-152 (LEEL…EQCQ), and 153-189 (LRDF…HTCE). At 21-1443 (RELLCGGSPE…TRPSANQLPW (1423 aa)) the chain is on the extracellular side. Intrachain disulfides connect Cys25–Cys38, Cys32–Cys48, Cys50–Cys59, Cys65–Cys77, Cys71–Cys100, Cys102–Cys111, Cys119–Cys130, Cys124–Cys140, Cys142–Cys151, Cys157–Cys168, Cys162–Cys177, Cys179–Cys188, Cys195–Cys208, Cys202–Cys217, Cys219–Cys228, Cys235–Cys246, Cys240–Cys259, Cys261–Cys270, Cys277–Cys288, Cys282–Cys297, Cys299–Cys308, Cys315–Cys329, Cys323–Cys338, Cys340–Cys349, Cys356–Cys367, Cys361–Cys376, Cys378–Cys387, Cys393–Cys404, Cys398–Cys415, Cys417–Cys426, Cys433–Cys449, Cys443–Cys458, Cys460–Cys469, Cys476–Cys487, Cys481–Cys496, Cys498–Cys507, Cys514–Cys525, Cys519–Cys534, Cys536–Cys545, Cys552–Cys563, Cys557–Cys572, Cys574–Cys583, Cys590–Cys601, Cys595–Cys610, Cys612–Cys621, Cys626–Cys637, Cys631–Cys646, Cys648–Cys655, Cys662–Cys669, Cys664–Cys674, Cys676–Cys685, Cys692–Cys703, Cys697–Cys712, Cys714–Cys723, Cys730–Cys741, Cys735–Cys750, Cys752–Cys761, Cys768–Cys779, Cys773–Cys788, Cys790–Cys799, Cys807–Cys818, Cys812–Cys827, Cys829–Cys838, Cys845–Cys856, Cys850–Cys865, Cys867–Cys876, Cys882–Cys903, Cys897–Cys912, Cys914–Cys923, Cys930–Cys941, Cys935–Cys950, Cys952–Cys961, Cys968–Cys979, Cys973–Cys988, Cys990–Cys999, Cys1006–Cys1019, Cys1011–Cys1028, Cys1030–Cys1039, Cys1046–Cys1057, Cys1051–Cys1069, Cys1071–Cys1080, Cys1087–Cys1098, Cys1092–Cys1110, Cys1112–Cys1121, Cys1130–Cys1142, Cys1136–Cys1155, Cys1157–Cys1166, Cys1174–Cys1187, Cys1183–Cys1199, Cys1210–Cys1234, Cys1216–Cys1229, Cys1225–Cys1241, Cys1247–Cys1273, Cys1255–Cys1268, and Cys1264–Cys1280. One can recognise an EGF-like 5; calcium-binding domain in the interval 191–229 (DINECFLEPGPCPQGTSCHNTLGSYQCLCPVGQEGPQCK). An EGF-like 6 domain is found at 231 to 271 (RKGACPPGSCLNGGTCQLVPEGHSTFHLCLCPPGFTGLDCE). One can recognise an EGF-like 7; calcium-binding domain in the interval 273–309 (NPDDCVRHQCQNGATCLDGLDTYTCLCPKTWKGWDCS). Residues 311–350 (DIDECEARGPPRCRNGGTCQNTAGSFHCVCVSGWGGAGCE) enclose the EGF-like 8; calcium-binding domain. Positions 352–388 (NLDDCAAATCAPGSTCIDRVGSFSCLCPPGRTGLLCH) constitute an EGF-like 9; calcium-binding domain. One can recognise an EGF-like 10 domain in the interval 389 to 427 (LEDMCLSQPCHVNAQCSTNPLTGSTLCICQPGYSGSTCH). An EGF-like 11; calcium-binding domain is found at 429-470 (DLDECQMAQQGPSPCEHGGSCINTPGSFNCLCLPGYTGSRCE). Residues 472 to 508 (DHNECLSQPCHPGSTCLDLLATFHCLCPPGLEGRLCE) enclose the EGF-like 12; calcium-binding domain. An EGF-like 13; calcium-binding domain is found at 510 to 546 (EVNECTSNPCLNQAACHDLLNGFQCLCLPGFTGARCE). The region spanning 548–584 (DMDECSSTPCANGGRCRDQPGAFYCECLPGFEGPHCE) is the EGF-like 14; calcium-binding domain. An EGF-like 15; calcium-binding domain is found at 586–622 (EVDECLSDPCPVGASCLDLPGAFFCLCRPGFTGQLCE). EGF-like domains lie at 623 to 656 (VPLC…PGCV), 658 to 686 (AEDN…PECE), 688 to 724 (ELGG…LTCS), 726 to 762 (EVTA…RHCQ), 764 to 800 (AVDH…LHCE), 803 to 839 (TNPS…SSCQ), 841 to 877 (LIDL…ALCD), 878 to 924 (FPLS…KLCQ), 926 to 962 (NVNP…QNCS), 964 to 1000 (VLDA…LRCE), 1002 to 1040 (DVDE…QRCE), 1042 to 1081 (EMDL…PTCS), 1083 to 1122 (KALS…PDCL), and 1126 to 1167 (APPG…PRCQ). Asn711 carries an N-linked (GlcNAc...) asparagine glycan. Asn960 carries an N-linked (GlcNAc...) asparagine glycan. N-linked (GlcNAc...) asparagine glycosylation occurs at Asn1139. LNR repeat units lie at residues 1166–1209 (CQRP…PWKG), 1210–1241 (CPPH…GYDC), and 1247–1287 (CIPA…GEDS). The interval 1345-1369 (EELSGARDSSSWERQAPPTQPLGKE) is disordered. The helical transmembrane segment at 1444-1464 (PILCSPVVGVLLLALGALLVL) threads the bilayer. At 1465–1964 (QLIRRRRREH…PLNSVVRNLN (500 aa)) the chain is on the cytoplasmic side. Residues 1516 to 1535 (VDEDGVAMCSGPEEGEAEET) are disordered. ANK repeat units follow at residues 1628–1657 (TGET…NPNQ), 1661–1691 (AGRT…TVDA), 1695–1724 (DGTT…DVGA), 1728–1757 (RGKT…DKDA), and 1761–1790 (REQT…ARGL). Positions 1879-1907 (RSGSCGGPTTRGRRFSAGSRGRRGARASQ) are disordered.

It belongs to the NOTCH family. In terms of assembly, heterodimer of a C-terminal fragment N(TM) and a N-terminal fragment N(EC) which are probably linked by disulfide bonds. Interacts with MAML1, MAML2 and MAML3 which act as transcriptional coactivators for NOTCH4. Post-translationally, synthesized in the endoplasmic reticulum as an inactive form which is proteolytically cleaved by a furin-like convertase in the trans-Golgi network before it reaches the plasma membrane to yield an active, ligand-accessible form. Cleavage results in a C-terminal fragment N(TM) and a N-terminal fragment N(EC). Following ligand binding, it is cleaved by TNF-alpha converting enzyme (TACE) to yield a membrane-associated intermediate fragment called notch extracellular truncation (NEXT). This fragment is then cleaved by presenilin dependent gamma-secretase to release a notch-derived peptide containing the intracellular domain (NICD) from the membrane. Phosphorylated. Highly expressed in lung, moderately in heart kidney, and at lower levels in the ovary and skeletal muscle. A very low expression is seen in the brain, intestine, liver and testis.

Its subcellular location is the cell membrane. It localises to the nucleus. Functionally, functions as a receptor for membrane-bound ligands Jagged1, Jagged2 and Delta1 to regulate cell-fate determination. Upon ligand activation through the released notch intracellular domain (NICD) it forms a transcriptional activator complex with RBPJ/RBPSUH and activates genes of the enhancer of split locus. Affects the implementation of differentiation, proliferation and apoptotic programs. May regulate branching morphogenesis in the developing vascular system. The protein is Neurogenic locus notch homolog protein 4 of Mus musculus (Mouse).